Here is a 350-residue protein sequence, read N- to C-terminus: Protein-glutamate methylesterase/protein-glutamine glutaminase 6 (350 aa).

The Response regulatory domain occupies 11-126; the sequence is RVLVVDDSAA…LAPVREELLE (116 aa). At aspartate 62 the chain carries 4-aspartylphosphate. One can recognise a CheB-type methylesterase domain in the interval 150–347; sequence ELEPARVAVV…ARLVEFARDA (198 aa). Active-site residues include serine 162, histidine 189, and aspartate 289.

Belongs to the CheB family. Phosphorylated by CheA. Phosphorylation of the N-terminal regulatory domain activates the methylesterase activity.

The protein resides in the cytoplasm. It catalyses the reaction [protein]-L-glutamate 5-O-methyl ester + H2O = L-glutamyl-[protein] + methanol + H(+). It carries out the reaction L-glutaminyl-[protein] + H2O = L-glutamyl-[protein] + NH4(+). Its function is as follows. Involved in chemotaxis. Part of a chemotaxis signal transduction system that modulates chemotaxis in response to various stimuli. Catalyzes the demethylation of specific methylglutamate residues introduced into the chemoreceptors (methyl-accepting chemotaxis proteins or MCP) by CheR. Also mediates the irreversible deamidation of specific glutamine residues to glutamic acid. This chain is Protein-glutamate methylesterase/protein-glutamine glutaminase 6, found in Anaeromyxobacter dehalogenans (strain 2CP-C).